A 496-amino-acid polypeptide reads, in one-letter code: Ankyrin repeat domain-containing protein 53 (496 aa).

The span at 1-15 (MASAGSTARRAGSGS) shows a compositional bias: low complexity. Residues 1–66 (MASAGSTARR…RPSEESDQTT (66 aa)) are disordered. Positions 51–60 (AESKQPRPSE) are enriched in basic and acidic residues. ANK repeat units lie at residues 105–135 (KGFT…PVNL), 139–172 (NSQT…ALNA), and 176–205 (NGCT…NVHA). Residues 292–320 (LVSNTKQARATALSKTPEQRGSQCSSSFH) form a disordered region.

Interacts with PSRC1; recruited by PSRC1 to the spindle during mitosis. Post-translationally, phosphorylated during mitosis.

Its subcellular location is the cytoplasm. The protein resides in the cytoskeleton. It is found in the spindle. It localises to the spindle pole. In terms of biological role, required for normal progression through mitosis. Involved in chromosome alignment and cytokinesis via regulation of microtubules polymerization. This is Ankyrin repeat domain-containing protein 53 (ANKRD53) from Macaca fascicularis (Crab-eating macaque).